We begin with the raw amino-acid sequence, 122 residues long: MSITKDQIIEAVSAMSVMDVVELISAMEEKFGVSAAAAVAVAAAGPAEAAEEKTEFDVILKAAGANKVAVIKAVRGATGLGLKEAKDLVESAPAALKEGVSKDDAEALKKSLEEAGAEVEVK.

The protein belongs to the bacterial ribosomal protein bL12 family. Homodimer. Part of the ribosomal stalk of the 50S ribosomal subunit. Forms a multimeric L10(L12)X complex, where L10 forms an elongated spine to which 2 to 4 L12 dimers bind in a sequential fashion. Binds GTP-bound translation factors.

Its function is as follows. Forms part of the ribosomal stalk which helps the ribosome interact with GTP-bound translation factors. Is thus essential for accurate translation. The sequence is that of Large ribosomal subunit protein bL12 from Cronobacter sakazakii (strain ATCC BAA-894) (Enterobacter sakazakii).